Here is a 157-residue protein sequence, read N- to C-terminus: MPRRGNIERRPIPPDARYNSVLVQKFINKVMERGKKSLAERIVYQALDLAAERLKKPQMEIFEQALRNASPSIEVRPKRVGGATYQVPVEVKSDRRYSLAMRWLLMSARARTGKPMVERLAAELIDAYNNTGTTIKRKEDVHRMAEANRAFAHYGRL.

It belongs to the universal ribosomal protein uS7 family. As to quaternary structure, part of the 30S ribosomal subunit. Contacts proteins S9 and S11.

Functionally, one of the primary rRNA binding proteins, it binds directly to 16S rRNA where it nucleates assembly of the head domain of the 30S subunit. Is located at the subunit interface close to the decoding center, probably blocks exit of the E-site tRNA. The polypeptide is Small ribosomal subunit protein uS7 (Chloroflexus aurantiacus (strain ATCC 29366 / DSM 635 / J-10-fl)).